A 249-amino-acid chain; its full sequence is ATP synthase subunit a (249 aa).

6 consecutive transmembrane segments (helical) span residues 33-53 (YMLI…AQLV), 83-103 (FFPL…IGII), 113-133 (LIVT…YGVA), 139-159 (FFSI…VMFI), 188-208 (VFAG…WVGG), and 216-236 (VALY…FAIL).

This sequence belongs to the ATPase A chain family. F-type ATPases have 2 components, CF(1) - the catalytic core - and CF(0) - the membrane proton channel. CF(1) has five subunits: alpha(3), beta(3), gamma(1), delta(1), epsilon(1). CF(0) has three main subunits: a(1), b(2) and c(9-12). The alpha and beta chains form an alternating ring which encloses part of the gamma chain. CF(1) is attached to CF(0) by a central stalk formed by the gamma and epsilon chains, while a peripheral stalk is formed by the delta and b chains.

It is found in the cell inner membrane. In terms of biological role, key component of the proton channel; it plays a direct role in the translocation of protons across the membrane. The sequence is that of ATP synthase subunit a from Bradyrhizobium diazoefficiens (strain JCM 10833 / BCRC 13528 / IAM 13628 / NBRC 14792 / USDA 110).